The chain runs to 298 residues: Cyclin-dependent kinase 2 homolog (298 aa).

Residues 4 to 284 form the Protein kinase domain; the sequence is YHKMEKIGEG…AKEALKHDYF (281 aa). ATP-binding positions include 10–18 and lysine 32; that span reads IGEGTYGVV. Threonine 14 bears the Phosphothreonine mark. Tyrosine 15 carries the post-translational modification Phosphotyrosine. The active-site Proton acceptor is the aspartate 125. Threonine 158 carries the post-translational modification Phosphothreonine.

It belongs to the protein kinase superfamily. CMGC Ser/Thr protein kinase family. CDC2/CDKX subfamily. As to quaternary structure, may form a complex composed of at least the catalytic subunit CRK2 and a cyclin. Requires Mg(2+) as cofactor.

It is found in the cytoplasm. It catalyses the reaction L-seryl-[protein] + ATP = O-phospho-L-seryl-[protein] + ADP + H(+). The catalysed reaction is L-threonyl-[protein] + ATP = O-phospho-L-threonyl-[protein] + ADP + H(+). It carries out the reaction [DNA-directed RNA polymerase] + ATP = phospho-[DNA-directed RNA polymerase] + ADP + H(+). Phosphorylation at Thr-14 or Tyr-15 inactivates the enzyme, while phosphorylation at Thr-158 activates it. Serine/threonine-protein kinase. Involved in the control of the cell cycle. Required for entry into S-phase and mitosis. Probable component of the kinase complex that phosphorylates the repetitive C-terminus of RNA polymerase II. This is Cyclin-dependent kinase 2 homolog from Theileria parva (East coast fever infection agent).